The sequence spans 354 residues: Guanine nucleotide-binding protein G(o) subunit alpha (354 aa).

Residue glycine 2 is the site of N-myristoyl glycine attachment. Cysteine 3 is lipidated: S-palmitoyl cysteine. In terms of domain architecture, G-alpha spans 32–354 (KDIKLLLLGA…ANNLRGCGLY (323 aa)). Residues 35–48 (KLLLLGAGESGKST) form a G1 motif region. GTP is bound by residues 40–47 (GAGESGKS), 176–182 (LRTRVKT), 201–205 (DVGGQ), 270–273 (NKKD), and alanine 326. Mg(2+)-binding residues include serine 47 and threonine 182. The segment at 174 to 182 (DILRTRVKT) is G2 motif. Positions 197–206 (FKLFDVGGQR) are G3 motif. Positions 266–273 (ILFLNKKD) are G4 motif. Positions 324-329 (TCATDT) are G5 motif.

This sequence belongs to the G-alpha family. G(i/o/t/z) subfamily. As to quaternary structure, g proteins are composed of 3 units; alpha, beta and gamma. The alpha chain contains the guanine nucleotide binding site.

Functionally, guanine nucleotide-binding proteins (G proteins) are involved as modulators or transducers in various transmembrane signaling systems. The G(o) protein function is not clear. The polypeptide is Guanine nucleotide-binding protein G(o) subunit alpha (Locusta migratoria (Migratory locust)).